Consider the following 117-residue polypeptide: MGRLTTHVLDTAAGTPGKDLAITLFKIVNNLRQPIKTVRTNHDGRCEAPLLEGEALQAGIYELDFAVGDYYRAAGVSLPDPAFLDVVTLRFGVADAGAHYHVPLLVSPWSYSTYRGS.

Substrate-binding residues include His7, Arg45, and Tyr114.

It belongs to the transthyretin family. 5-hydroxyisourate hydrolase subfamily. In terms of assembly, homotetramer.

The catalysed reaction is 5-hydroxyisourate + H2O = 5-hydroxy-2-oxo-4-ureido-2,5-dihydro-1H-imidazole-5-carboxylate + H(+). Catalyzes the hydrolysis of 5-hydroxyisourate (HIU) to 2-oxo-4-hydroxy-4-carboxy-5-ureidoimidazoline (OHCU). This is 5-hydroxyisourate hydrolase from Ralstonia nicotianae (strain ATCC BAA-1114 / GMI1000) (Ralstonia solanacearum).